The following is a 688-amino-acid chain: uncharacterized protein (688 aa).

This is an uncharacterized protein from Saccharomyces cerevisiae (strain ATCC 204508 / S288c) (Baker's yeast).